A 259-amino-acid polypeptide reads, in one-letter code: Troponin T, fast skeletal muscle (259 aa).

The segment covering 1-36 has biased composition (acidic residues); it reads MSDEETEQVEEQYEEEEEAQEEEVQEEAPEPEEVQE. The tract at residues 1-62 is disordered; sequence MSDEETEQVE…EKVDFDDIQK (62 aa). At serine 2 the chain carries N-acetylserine. The residue at position 2 (serine 2) is a Phosphoserine. Over residues 50–62 the composition is skewed to basic and acidic residues; it reads PEGEKVDFDDIQK. Serine 78 bears the Phosphoserine mark. Positions 101–143 are enriched in basic and acidic residues; sequence RAERAEQQRIRAEKERERQNRLAEEKARREEEDAKRRAEDDLK. The disordered stretch occupies residues 101–180; sequence RAERAEQQRI…TAREMKKKIL (80 aa). A phosphoserine mark is found at serine 149, serine 156, and serine 157. Residues 171–180 show a composition bias toward basic and acidic residues; sequence TAREMKKKIL. Serine 193 is subject to Phosphoserine. Phosphotyrosine is present on tyrosine 209. The tract at residues 235 to 259 is disordered; sequence RIDQAQKHSKKAGATAKGKVGGRWK.

Belongs to the troponin T family.

Its function is as follows. Troponin T is the tropomyosin-binding subunit of troponin, the thin filament regulatory complex which confers calcium-sensitivity to striated muscle actomyosin ATPase activity. In Rattus norvegicus (Rat), this protein is Troponin T, fast skeletal muscle (Tnnt3).